Reading from the N-terminus, the 776-residue chain is MALADKRLENLQIYKVLQCVRNKDKKQIEKLTKLGYPELINYTEPINGLSALHLASVSNDIDMVSFLLDLGAHPDVQDRMGCTPTMRAAELGHELSMEILAKAKADMTIVDNEGKGVLFYCILPTKRHYRCALIALEHGADVNNSTYEGKPIFLRACEDAHDVKDVCLTFLEKGANPNAINSSTGRTALMEASREGVVEIVRGILERGGEVNAFDNDRHHAAHFAAKGGFFDILKLLFAYNGDVGLISINGNTPLHYAAMGGFADCCKYIAQRGCDLKWKNLDHKTPRAVAKEGGFKAASKEIRRAERIANKLARPGAKNPNPLWALRLHDWSVEREAFLREAFAVLDRGDGSISKNDFVMVLEERQDYASSEQLAAIAHLHEKTRGGGVNINEFFKGTRYLNKSFVLGSYGPKKKEKGMGKKGKKGKFVLPLPICVIPEYAFPRRQDGGPPYYMIETYKNVTDSSRFNRDHPPEHPIQDDSVWYIDDSEKVFSNINIITKAGDLASLKKAFESGIPVDMKDNYYKTPLMTACASGNIDVVKFLLEKGANVNATDNFLWTPLHFACHAGQQDIVELLVESGALIDAASINNSTPLNRAIESCRLDTVKYLLDIGAKFQLENRKGHSAMDVAKAYADYRIIDLIKEKLDNLPKPAENQKLKGKTPPILKTEGPEIKKEEELLSSIYGVPTTSEGKKVQKGNVVHLNSLITSGYTKKVDITFIPRRIWSPEATTAELIRKRELRRERFTHEVDFDDFMMPFQKNITEKARALEAALKT.

4 ANK repeats span residues 47 to 76, 184 to 213, 217 to 246, and 250 to 279; these read NGLSALHLASVSNDIDMVSFLLDLGAHPDV, TGRTALMEASREGVVEIVRGILERGGEVNA, DRHHAAHFAAKGGFFDILKLLFAYNGDVGL, and NGNTPLHYAAMGGFADCCKYIAQRGCDLKW. One can recognise an EF-hand domain in the interval 335 to 369; the sequence is EREAFLREAFAVLDRGDGSISKNDFVMVLEERQDY. 4 ANK repeats span residues 524-553, 557-586, 590-619, and 623-652; these read YYKTPLMTACASGNIDVVKFLLEKGANVNA, FLWTPLHFACHAGQQDIVELLVESGALIDA, NNSTPLNRAIESCRLDTVKYLLDIGAKFQL, and KGHSAMDVAKAYADYRIIDLIKEKLDNLPK.

The polypeptide is Ankyrin repeat and EF-hand domain-containing protein 1 (ANKEF1) (Homo sapiens (Human)).